A 260-amino-acid chain; its full sequence is Putative [LysW]-aminoadipate/[LysW]-glutamate kinase (260 aa).

Substrate-binding positions include 35 to 36 (GG), Arg62, and Asn162.

Belongs to the acetylglutamate kinase family. LysZ subfamily.

The protein localises to the cytoplasm. It catalyses the reaction [amino-group carrier protein]-C-terminal-N-(1,4-dicarboxybutan-1-yl)-L-glutamine + ATP = [amino-group carrier protein]-C-terminal-N-(1-carboxy-5-phosphooxy-5-oxopentan-1-yl)-L-glutamine + ADP. The catalysed reaction is [amino-group carrier protein]-C-terminal-gamma-(L-glutamyl)-L-glutamate + ATP = [amino-group carrier protein]-C-terminal-gamma-(5-phospho-L-glutamyl)-L-glutamate + ADP. It participates in amino-acid biosynthesis; L-lysine biosynthesis via AAA pathway; L-lysine from L-alpha-aminoadipate (Thermus route): step 2/5. The protein operates within amino-acid biosynthesis; L-arginine biosynthesis. Involved in both the arginine and lysine biosynthetic pathways. Phosphorylates the LysW-bound precursors glutamate (for arginine biosynthesis), respectively alpha-aminoadipate (for lysine biosynthesis). The chain is Putative [LysW]-aminoadipate/[LysW]-glutamate kinase from Pyrobaculum neutrophilum (strain DSM 2338 / JCM 9278 / NBRC 100436 / V24Sta) (Thermoproteus neutrophilus).